We begin with the raw amino-acid sequence, 122 residues long: Large ribosomal subunit protein uL14c (122 aa).

The protein belongs to the universal ribosomal protein uL14 family. As to quaternary structure, part of the 50S ribosomal subunit.

It localises to the plastid. The protein localises to the chloroplast. Its function is as follows. Binds to 23S rRNA. This is Large ribosomal subunit protein uL14c from Calycanthus floridus var. glaucus (Eastern sweetshrub).